A 476-amino-acid polypeptide reads, in one-letter code: Argininosuccinate lyase (476 aa).

It belongs to the lyase 1 family. Argininosuccinate lyase subfamily.

Its subcellular location is the cytoplasm. It catalyses the reaction 2-(N(omega)-L-arginino)succinate = fumarate + L-arginine. It functions in the pathway amino-acid biosynthesis; L-arginine biosynthesis; L-arginine from L-ornithine and carbamoyl phosphate: step 3/3. The polypeptide is Argininosuccinate lyase (Nitrosospira multiformis (strain ATCC 25196 / NCIMB 11849 / C 71)).